Here is a 529-residue protein sequence, read N- to C-terminus: Glycylpeptide N-tetradecanoyltransferase 2 (529 aa).

The disordered stretch occupies residues Met-1–Lys-82. The segment covering Glu-15–Thr-32 has biased composition (acidic residues). A Phosphoserine modification is found at Ser-38. A compositionally biased stretch (basic residues) spans Lys-46 to Glu-57. Residues Ser-61–Lys-82 are compositionally biased toward polar residues. Residues Trp-153, Leu-281, Val-283, Ser-289, Arg-291, Val-292, and Ala-293 each contribute to the tetradecanoyl-CoA site.

This sequence belongs to the NMT family.

It is found in the cytoplasm. It localises to the membrane. It carries out the reaction N-terminal glycyl-[protein] + tetradecanoyl-CoA = N-tetradecanoylglycyl-[protein] + CoA + H(+). The catalysed reaction is N-terminal glycyl-L-lysyl-[protein] + tetradecanoyl-CoA = N-terminal glycyl-(N(6)-tetradecanoyl)-L-lysyl-[protein] + CoA + H(+). In terms of biological role, adds a myristoyl group to the N-terminal glycine residue of certain cellular and viral proteins. Also able to mediate N-terminal lysine myristoylation of proteins: catalyzes myristoylation of ARF6 on both 'Gly-2' and 'Lys-3'. Lysine myristoylation is required to maintain ARF6 on membranes during the GTPase cycle. The sequence is that of Glycylpeptide N-tetradecanoyltransferase 2 (Nmt2) from Mus musculus (Mouse).